Reading from the N-terminus, the 136-residue chain is Large ribosomal subunit protein bL19 (136 aa).

It belongs to the bacterial ribosomal protein bL19 family.

In terms of biological role, this protein is located at the 30S-50S ribosomal subunit interface and may play a role in the structure and function of the aminoacyl-tRNA binding site. The protein is Large ribosomal subunit protein bL19 of Xylella fastidiosa (strain 9a5c).